Reading from the N-terminus, the 404-residue chain is CCA-adding enzyme (404 aa).

2 residues coordinate ATP: G27 and R30. Residues G27 and R30 each coordinate CTP. D40 and D42 together coordinate Mg(2+). Residues R111, D154, R157, R160, and R163 each contribute to the ATP site. Residues R111, D154, R157, R160, and R163 each coordinate CTP.

It belongs to the tRNA nucleotidyltransferase/poly(A) polymerase family. Bacterial CCA-adding enzyme type 3 subfamily. Homodimer. The cofactor is Mg(2+).

The catalysed reaction is a tRNA precursor + 2 CTP + ATP = a tRNA with a 3' CCA end + 3 diphosphate. It carries out the reaction a tRNA with a 3' CCA end + 2 CTP + ATP = a tRNA with a 3' CCACCA end + 3 diphosphate. Catalyzes the addition and repair of the essential 3'-terminal CCA sequence in tRNAs without using a nucleic acid template. Adds these three nucleotides in the order of C, C, and A to the tRNA nucleotide-73, using CTP and ATP as substrates and producing inorganic pyrophosphate. tRNA 3'-terminal CCA addition is required both for tRNA processing and repair. Also involved in tRNA surveillance by mediating tandem CCA addition to generate a CCACCA at the 3' terminus of unstable tRNAs. While stable tRNAs receive only 3'-terminal CCA, unstable tRNAs are marked with CCACCA and rapidly degraded. In Geobacillus thermodenitrificans (strain NG80-2), this protein is CCA-adding enzyme.